A 199-amino-acid chain; its full sequence is 3-isopropylmalate dehydratase small subunit (199 aa).

Belongs to the LeuD family. LeuD type 1 subfamily. In terms of assembly, heterodimer of LeuC and LeuD.

It carries out the reaction (2R,3S)-3-isopropylmalate = (2S)-2-isopropylmalate. The protein operates within amino-acid biosynthesis; L-leucine biosynthesis; L-leucine from 3-methyl-2-oxobutanoate: step 2/4. Functionally, catalyzes the isomerization between 2-isopropylmalate and 3-isopropylmalate, via the formation of 2-isopropylmaleate. The chain is 3-isopropylmalate dehydratase small subunit from Tolumonas auensis (strain DSM 9187 / NBRC 110442 / TA 4).